We begin with the raw amino-acid sequence, 376 residues long: Lipid-A-disaccharide synthase (376 aa).

This sequence belongs to the LpxB family.

It carries out the reaction a lipid X + a UDP-2-N,3-O-bis[(3R)-3-hydroxyacyl]-alpha-D-glucosamine = a lipid A disaccharide + UDP + H(+). Its pathway is bacterial outer membrane biogenesis; LPS lipid A biosynthesis. Its function is as follows. Condensation of UDP-2,3-diacylglucosamine and 2,3-diacylglucosamine-1-phosphate to form lipid A disaccharide, a precursor of lipid A, a phosphorylated glycolipid that anchors the lipopolysaccharide to the outer membrane of the cell. This Coxiella burnetii (strain CbuK_Q154) (Coxiella burnetii (strain Q154)) protein is Lipid-A-disaccharide synthase.